The following is a 253-amino-acid chain: Sortase SrtE2 (253 aa).

Residues 1 to 11 (MAATTDTEHQE) show a composition bias toward basic and acidic residues. The segment at 1–23 (MAATTDTEHQEQAGTGGRGRRRP) is disordered. A helical transmembrane segment spans residues 30–50 (AVSVLGELLITAGLVMGLFVV). The interval 69 to 89 (EKVRDDWAQDRVGGSGQDGPG) is disordered. Cys-220 is an active-site residue.

It belongs to the bacterial sortase family. Class E subfamily.

Its subcellular location is the cell membrane. The catalysed reaction is The enzyme catalyzes a cell wall sorting reaction in which a surface protein with a sorting signal containing a LPXTG motif is cleaved between the Thr and Gly residue. The resulting threonine carboxyl end of the protein is covalently attached to a pentaglycine cross-bridge of peptidoglycan.. Functionally, transpeptidase that anchors surface proteins to the cell wall. Recognizes Leu-Ala-x-Thr-Gly and Leu-Pro-x-Thr-Gly, with a preference for the former. Unlike the S.aureus sortase it cleaves not only the Thr-Gly motif but also the Ala-X bond; an Ala-Glu bond is a better substrate than the Thr-Gly motif in vitro. Among its possible substrates are the chaplins ChpA, ChpB and ChpC; this enzyme is more important for ChpC attachment than is SrtE1. A double knockout mutant of srtE1 and srtE2 shows a developmental defect in aerial hyphae formation more dramatic than that due to chaplin deletion. This chain is Sortase SrtE2, found in Streptomyces coelicolor (strain ATCC BAA-471 / A3(2) / M145).